A 299-amino-acid polypeptide reads, in one-letter code: MKKKLIIVVGPTASGKSDLTFKLAQDLKSEIIVCDAYQVYKEISKGINKPEIENLNAIKHHFVNHVSINEVWHIKRFKEEIEELINSNMDKNFILEGGSNLYIDCLINNYQLNELDLTLDYSNLSNDELYEKLQKLDFEESLKISKNNKKRLIQALRIIESNNNTKKSVLDKNNKEPLYDFFLIRMIIDRDILYKKINDRADKMFKNNWREEVEQLIKANGNSMMNTNALKALGYDEIYNSIIENRETNLDLIKQKTRNYAKRQETWIRNKFKIDFNFSNYDQYNELLDKCKAFLNDKK.

10–17 serves as a coordination point for ATP; it reads GPTASGKS. 12 to 17 lines the substrate pocket; sequence TASGKS.

This sequence belongs to the IPP transferase family. As to quaternary structure, monomer. It depends on Mg(2+) as a cofactor.

It carries out the reaction adenosine(37) in tRNA + dimethylallyl diphosphate = N(6)-dimethylallyladenosine(37) in tRNA + diphosphate. Functionally, catalyzes the transfer of a dimethylallyl group onto the adenine at position 37 in tRNAs that read codons beginning with uridine, leading to the formation of N6-(dimethylallyl)adenosine (i(6)A). The polypeptide is tRNA dimethylallyltransferase (Malacoplasma penetrans (strain HF-2) (Mycoplasma penetrans)).